The sequence spans 376 residues: GTPase Obg (376 aa).

Positions 2-161 (ASFVDEVLIR…RVVHVELRIV (160 aa)) constitute an Obg domain. The 167-residue stretch at 162–328 (ADVGFVGLPN…LQEAFVRLSD (167 aa)) folds into the OBG-type G domain. GTP is bound by residues 168-175 (GLPNAGKS), 193-197 (FTTRI), 215-218 (DVPG), 282-285 (TKLD), and 309-311 (SVH). The Mg(2+) site is built by S175 and T195.

Belongs to the TRAFAC class OBG-HflX-like GTPase superfamily. OBG GTPase family. Monomer. Mg(2+) is required as a cofactor.

The protein localises to the cytoplasm. An essential GTPase which binds GTP, GDP and possibly (p)ppGpp with moderate affinity, with high nucleotide exchange rates and a fairly low GTP hydrolysis rate. Plays a role in control of the cell cycle, stress response, ribosome biogenesis and in those bacteria that undergo differentiation, in morphogenesis control. The sequence is that of GTPase Obg from Treponema pallidum (strain Nichols).